The chain runs to 550 residues: Arginine--tRNA ligase (550 aa).

The 'HIGH' region signature appears at 130 to 140; sequence ANPTGPIHLGG.

The protein belongs to the class-I aminoacyl-tRNA synthetase family. In terms of assembly, monomer.

It localises to the cytoplasm. The catalysed reaction is tRNA(Arg) + L-arginine + ATP = L-arginyl-tRNA(Arg) + AMP + diphosphate. In Rhodococcus jostii (strain RHA1), this protein is Arginine--tRNA ligase.